The chain runs to 382 residues: Phosphatidylglycerol--prolipoprotein diacylglyceryl transferase (382 aa).

3 consecutive transmembrane segments (helical) span residues 18–38 (IQWY…MFVF), 53–73 (FFIF…SFVI), and 91–111 (LAIQ…FNFF). Arg-162 contacts a 1,2-diacyl-sn-glycero-3-phospho-(1'-sn-glycerol). 4 consecutive transmembrane segments (helical) span residues 213–233 (IPLF…IYFV), 243–263 (GTIG…LENF), 274–294 (ITTS…CQFI), and 302–322 (FWTY…TTLF).

It belongs to the Lgt family.

The protein localises to the cell membrane. The catalysed reaction is L-cysteinyl-[prolipoprotein] + a 1,2-diacyl-sn-glycero-3-phospho-(1'-sn-glycerol) = an S-1,2-diacyl-sn-glyceryl-L-cysteinyl-[prolipoprotein] + sn-glycerol 1-phosphate + H(+). It participates in protein modification; lipoprotein biosynthesis (diacylglyceryl transfer). In terms of biological role, catalyzes the transfer of the diacylglyceryl group from phosphatidylglycerol to the sulfhydryl group of the N-terminal cysteine of a prolipoprotein, the first step in the formation of mature lipoproteins. The polypeptide is Phosphatidylglycerol--prolipoprotein diacylglyceryl transferase (Mycoplasma genitalium (strain ATCC 33530 / DSM 19775 / NCTC 10195 / G37) (Mycoplasmoides genitalium)).